The sequence spans 368 residues: 4-hydroxy-3-methylbut-2-en-1-yl diphosphate synthase (flavodoxin) (368 aa).

Residues Cys268, Cys271, Cys303, and Glu310 each contribute to the [4Fe-4S] cluster site.

Belongs to the IspG family. [4Fe-4S] cluster serves as cofactor.

The enzyme catalyses (2E)-4-hydroxy-3-methylbut-2-enyl diphosphate + oxidized [flavodoxin] + H2O + 2 H(+) = 2-C-methyl-D-erythritol 2,4-cyclic diphosphate + reduced [flavodoxin]. Its pathway is isoprenoid biosynthesis; isopentenyl diphosphate biosynthesis via DXP pathway; isopentenyl diphosphate from 1-deoxy-D-xylulose 5-phosphate: step 5/6. Functionally, converts 2C-methyl-D-erythritol 2,4-cyclodiphosphate (ME-2,4cPP) into 1-hydroxy-2-methyl-2-(E)-butenyl 4-diphosphate. The sequence is that of 4-hydroxy-3-methylbut-2-en-1-yl diphosphate synthase (flavodoxin) from Listeria monocytogenes serovar 1/2a (strain ATCC BAA-679 / EGD-e).